We begin with the raw amino-acid sequence, 101 residues long: Small ribosomal subunit protein uS14 (101 aa).

This sequence belongs to the universal ribosomal protein uS14 family. Part of the 30S ribosomal subunit. Contacts proteins S3 and S10.

In terms of biological role, binds 16S rRNA, required for the assembly of 30S particles and may also be responsible for determining the conformation of the 16S rRNA at the A site. The sequence is that of Small ribosomal subunit protein uS14 from Shewanella loihica (strain ATCC BAA-1088 / PV-4).